The following is a 457-amino-acid chain: Bifunctional protein GlmU (457 aa).

Residues 1 to 229 are pyrophosphorylase; it reads MSNSAKSVVI…LSEMEGVNNR (229 aa). UDP-N-acetyl-alpha-D-glucosamine contacts are provided by residues 11-14, Lys25, Gln76, 81-82, 103-105, Gly140, Glu154, Asn169, and Asn227; these read LAAG, GT, and YGD. Mg(2+) is bound at residue Asp105. Asn227 contributes to the Mg(2+) binding site. The linker stretch occupies residues 230 to 250; it reads LQLSALERIYQSEQAEQLLLA. The N-acetyltransferase stretch occupies residues 251–457; it reads GVMLLDPARF…GWKRPVKEKK (207 aa). Residues Arg333 and Lys351 each coordinate UDP-N-acetyl-alpha-D-glucosamine. The active-site Proton acceptor is His363. 2 residues coordinate UDP-N-acetyl-alpha-D-glucosamine: Tyr366 and Asn377. Residues Ala380, 386-387, Ser405, Ala423, and Arg440 contribute to the acetyl-CoA site; that span reads NY.

It in the N-terminal section; belongs to the N-acetylglucosamine-1-phosphate uridyltransferase family. The protein in the C-terminal section; belongs to the transferase hexapeptide repeat family. As to quaternary structure, homotrimer. The cofactor is Mg(2+).

Its subcellular location is the cytoplasm. It catalyses the reaction alpha-D-glucosamine 1-phosphate + acetyl-CoA = N-acetyl-alpha-D-glucosamine 1-phosphate + CoA + H(+). It carries out the reaction N-acetyl-alpha-D-glucosamine 1-phosphate + UTP + H(+) = UDP-N-acetyl-alpha-D-glucosamine + diphosphate. The protein operates within nucleotide-sugar biosynthesis; UDP-N-acetyl-alpha-D-glucosamine biosynthesis; N-acetyl-alpha-D-glucosamine 1-phosphate from alpha-D-glucosamine 6-phosphate (route II): step 2/2. It participates in nucleotide-sugar biosynthesis; UDP-N-acetyl-alpha-D-glucosamine biosynthesis; UDP-N-acetyl-alpha-D-glucosamine from N-acetyl-alpha-D-glucosamine 1-phosphate: step 1/1. It functions in the pathway bacterial outer membrane biogenesis; LPS lipid A biosynthesis. Catalyzes the last two sequential reactions in the de novo biosynthetic pathway for UDP-N-acetylglucosamine (UDP-GlcNAc). The C-terminal domain catalyzes the transfer of acetyl group from acetyl coenzyme A to glucosamine-1-phosphate (GlcN-1-P) to produce N-acetylglucosamine-1-phosphate (GlcNAc-1-P), which is converted into UDP-GlcNAc by the transfer of uridine 5-monophosphate (from uridine 5-triphosphate), a reaction catalyzed by the N-terminal domain. The polypeptide is Bifunctional protein GlmU (Photorhabdus laumondii subsp. laumondii (strain DSM 15139 / CIP 105565 / TT01) (Photorhabdus luminescens subsp. laumondii)).